The sequence spans 445 residues: GTPase Der (445 aa).

2 consecutive EngA-type G domains span residues 3 to 167 and 180 to 353; these read PVIA…YAGQ and IKIA…AAAM. GTP is bound by residues 9–16, 56–60, 119–122, 186–193, 233–237, and 298–301; these read GRPNVGKS, DTGGF, NKAE, DTAGL, and NKWD. The 85-residue stretch at 354-438 folds into the KH-like domain; it reads AKLPTPKLTR…PLRIEFRSSN (85 aa).

This sequence belongs to the TRAFAC class TrmE-Era-EngA-EngB-Septin-like GTPase superfamily. EngA (Der) GTPase family. As to quaternary structure, associates with the 50S ribosomal subunit.

GTPase that plays an essential role in the late steps of ribosome biogenesis. This chain is GTPase Der, found in Burkholderia vietnamiensis (strain G4 / LMG 22486) (Burkholderia cepacia (strain R1808)).